Consider the following 229-residue polypeptide: Transmembrane protein 217 (229 aa).

The helical transmembrane segment at methionine 13–glutamate 33 threads the bilayer. Asparagine 39 is a glycosylation site (N-linked (GlcNAc...) asparagine). 3 helical membrane passes run isoleucine 67–tyrosine 87, leucine 94–leucine 114, and tryptophan 129–tyrosine 149. Asparagine 156 is a glycosylation site (N-linked (GlcNAc...) asparagine).

Its subcellular location is the membrane. This Homo sapiens (Human) protein is Transmembrane protein 217 (TMEM217).